The chain runs to 235 residues: Protein FAM3B (235 aa).

A signal peptide spans 1–29; it reads MRPLAGGLLKVVFVVFASLCAWYSGYLLA. Intrachain disulfides connect C63-C91 and C69-C229. The GG-type lectin domain occupies 72-233; it reads DTYAYRLLSG…IQIEGCIPKE (162 aa). N-linked (GlcNAc...) asparagine glycans are attached at residues N120 and N208.

Belongs to the FAM3 family. In terms of processing, 2 N-termini have been observed in the mature protein: the first at Glu-30, resulting from signal peptide cleavage, the second at Ser-46. Post-translationally, O-glycosylated. As to expression, highly expressed in the pancreas. Also found in the colon, kidney, prostate, small intestine and testis.

Its subcellular location is the secreted. In terms of biological role, induces apoptosis of alpha and beta cells in a dose- and time-dependent manner. The protein is Protein FAM3B (FAM3B) of Homo sapiens (Human).